The primary structure comprises 925 residues: Ubp5-interacting protein ftp105 (925 aa).

A compositionally biased stretch (low complexity) spans 650-664 (EGSSDFESKSSDNTS). A disordered region spans residues 650–671 (EGSSDFESKSSDNTSLDGTPLQ).

This sequence belongs to the hid-1 family. Interacts with ubp5.

It localises to the cytoplasm. Its subcellular location is the golgi apparatus. Functionally, required for the localization of ubp5 to the Golgi apparatus. Involved in detoxification of cadmium ion. The protein is Ubp5-interacting protein ftp105 (ftp105) of Schizosaccharomyces pombe (strain 972 / ATCC 24843) (Fission yeast).